A 643-amino-acid polypeptide reads, in one-letter code: Phosphomethylpyrimidine synthase (643 aa).

Residues asparagine 248, methionine 277, tyrosine 306, histidine 342, 362-364 (SRG), 403-406 (DGLR), and glutamate 442 contribute to the substrate site. Residue histidine 446 participates in Zn(2+) binding. Tyrosine 469 is a binding site for substrate. Histidine 510 lines the Zn(2+) pocket. [4Fe-4S] cluster is bound by residues cysteine 590, cysteine 593, and cysteine 598.

It belongs to the ThiC family. As to quaternary structure, homodimer. Requires [4Fe-4S] cluster as cofactor.

It carries out the reaction 5-amino-1-(5-phospho-beta-D-ribosyl)imidazole + S-adenosyl-L-methionine = 4-amino-2-methyl-5-(phosphooxymethyl)pyrimidine + CO + 5'-deoxyadenosine + formate + L-methionine + 3 H(+). It functions in the pathway cofactor biosynthesis; thiamine diphosphate biosynthesis. In terms of biological role, catalyzes the synthesis of the hydroxymethylpyrimidine phosphate (HMP-P) moiety of thiamine from aminoimidazole ribotide (AIR) in a radical S-adenosyl-L-methionine (SAM)-dependent reaction. The sequence is that of Phosphomethylpyrimidine synthase from Burkholderia multivorans (strain ATCC 17616 / 249).